A 221-amino-acid chain; its full sequence is Translation initiation factor 6 (221 aa).

The protein belongs to the eIF-6 family.

Binds to the 50S ribosomal subunit and prevents its association with the 30S ribosomal subunit to form the 70S initiation complex. The polypeptide is Translation initiation factor 6 (Methanosphaerula palustris (strain ATCC BAA-1556 / DSM 19958 / E1-9c)).